Here is a 398-residue protein sequence, read N- to C-terminus: GTP cyclohydrolase-2 (398 aa).

The segment at 1–172 (MNTPTHTHPH…TAAAGASTTE (172 aa)) is unknown. The tract at residues 173–398 (YELVTRTPVP…VKSIPKTGHA (226 aa)) is GTP cyclohydrolase II. 220–224 (RVHSS) is a binding site for GTP. Positions 225, 236, and 238 each coordinate Zn(2+). Residues glutamine 241, 263 to 265 (EGR), and threonine 285 contribute to the GTP site. Aspartate 297 (proton acceptor) is an active-site residue. Residue arginine 299 is the Nucleophile of the active site. Positions 320 and 325 each coordinate GTP. Residues 375–398 (QRPQDPSETVDGETVKSIPKTGHA) form a disordered region.

The protein in the C-terminal section; belongs to the GTP cyclohydrolase II family. Requires Zn(2+) as cofactor.

It carries out the reaction GTP + 4 H2O = 2,5-diamino-6-hydroxy-4-(5-phosphoribosylamino)-pyrimidine + formate + 2 phosphate + 3 H(+). The protein operates within cofactor biosynthesis; riboflavin biosynthesis; 5-amino-6-(D-ribitylamino)uracil from GTP: step 1/4. Functionally, catalyzes the conversion of GTP to 2,5-diamino-6-ribosylamino-4(3H)-pyrimidinone 5'-phosphate (DARP), formate and pyrophosphate. The chain is GTP cyclohydrolase-2 (ribA) from Xylella fastidiosa (strain 9a5c).